We begin with the raw amino-acid sequence, 365 residues long: DNA replication and repair protein RecF (365 aa).

30–37 contributes to the ATP binding site; sequence GQNGSGKT.

This sequence belongs to the RecF family.

It localises to the cytoplasm. In terms of biological role, the RecF protein is involved in DNA metabolism; it is required for DNA replication and normal SOS inducibility. RecF binds preferentially to single-stranded, linear DNA. It also seems to bind ATP. This is DNA replication and repair protein RecF from Shewanella halifaxensis (strain HAW-EB4).